We begin with the raw amino-acid sequence, 306 residues long: Ribonuclease Z (306 aa).

Positions 63, 65, 67, 68, 140, 211, and 269 each coordinate Zn(2+). Asp-67 (proton acceptor) is an active-site residue.

Belongs to the RNase Z family. In terms of assembly, homodimer. It depends on Zn(2+) as a cofactor.

It catalyses the reaction Endonucleolytic cleavage of RNA, removing extra 3' nucleotides from tRNA precursor, generating 3' termini of tRNAs. A 3'-hydroxy group is left at the tRNA terminus and a 5'-phosphoryl group is left at the trailer molecule.. Its function is as follows. Zinc phosphodiesterase, which displays some tRNA 3'-processing endonuclease activity. Probably involved in tRNA maturation, by removing a 3'-trailer from precursor tRNA. This Listeria monocytogenes serovar 1/2a (strain ATCC BAA-679 / EGD-e) protein is Ribonuclease Z.